The chain runs to 115 residues: Large ribosomal subunit protein bL19 (115 aa).

The protein belongs to the bacterial ribosomal protein bL19 family.

This protein is located at the 30S-50S ribosomal subunit interface and may play a role in the structure and function of the aminoacyl-tRNA binding site. The protein is Large ribosomal subunit protein bL19 of Lactobacillus delbrueckii subsp. bulgaricus (strain ATCC BAA-365 / Lb-18).